Here is a 650-residue protein sequence, read N- to C-terminus: Acetyl-coenzyme A synthetase (650 aa).

CoA contacts are provided by residues 191-194 (RGGR), Thr-311, and Asn-335. Residues 387 to 389 (GEP), 411 to 416 (DTWWQT), Asp-500, and Arg-515 contribute to the ATP site. Ser-523 provides a ligand contact to CoA. Arg-526 contacts ATP. Positions 537, 539, and 542 each coordinate Mg(2+). CoA is bound at residue Arg-584. The residue at position 609 (Lys-609) is an N6-acetyllysine.

This sequence belongs to the ATP-dependent AMP-binding enzyme family. Mg(2+) is required as a cofactor. Post-translationally, acetylated. Deacetylation by the SIR2-homolog deacetylase activates the enzyme.

The catalysed reaction is acetate + ATP + CoA = acetyl-CoA + AMP + diphosphate. Functionally, catalyzes the conversion of acetate into acetyl-CoA (AcCoA), an essential intermediate at the junction of anabolic and catabolic pathways. AcsA undergoes a two-step reaction. In the first half reaction, AcsA combines acetate with ATP to form acetyl-adenylate (AcAMP) intermediate. In the second half reaction, it can then transfer the acetyl group from AcAMP to the sulfhydryl group of CoA, forming the product AcCoA. This Shewanella sp. (strain MR-7) protein is Acetyl-coenzyme A synthetase.